Here is a 1594-residue protein sequence, read N- to C-terminus: MRTRFLNIDYFSTPPSHVFETLGFLNLPAPDNFPAPIVYNGEEDRLRFGSIENVSIPIGNLPIEAALSKFLSDVVPDRVSVDYRVFEIDDSSLGVYYSDEKDDGDAIADKATPKIIELETPELDFEMENKLLCTSEDHLQCFSEVLEIKNDPVKYEGSDIILQNSKDIQEQIYSVDYIPSDYFTENNTSVAENECFRKIQPWFKDARFPLLEVDEVNLSELSSLSVLDKVFTVLETIEPQDTNAGSSLIINSKELIGSKDYDLLDVLSTDCYLNKSGQSDVVPEDEFSEMDIVTILEISNAEEFQGKVAVPVTYEEFQILDVDISDVFDIFLCLQKAIEPEICYGMFSKEMNFKDFDELVVSSELAFTDDAFKSLPTPILHDYEMTRSLELIYEDVLSKIKPQSLSASNDIYLPWNLLEERNHNHCDYPFEEIVTFNIDYNWEASEGDKWVYDFIFSEDAFCEPLVEKCTEPFYGISNLDEHAPVNTSHGLLENPFQKTGARDCAVDDNAKKATLLFKSMSAFDDLTFFMDPKKAVIEDNLESRVEAAKTTNHKCMSIDSKASCRSGGMHPNPKTEEMILHSVRPSENIQALVGEFVKSYLTLVKDESENLSEDKLKLLSISKGKLIDCIRKANVHKTQLADDKTFTFALLLAIKQMTWYMCFFGIHVAYIYLNKVCRSSNPMKIGLHTLYSAVETEHKSDETDITRSHPSLAVIQGILQSEFARGNSKALLLAEKVFWSSLKRLLMSMGLSYNDLNSPSPSGNRPNVHEAIELGFLPISDCLIISYEQISPSFPVENFSVIVEYGGPNASPRYSFPSKLDSFPSFHFIKVELDMPSACGQLCAGVTVPYSLKMIKGDEVETKTGWLEEVLNFVPLEKVCYAGSSETTNESEFISMPQESERKRGIIEQGLSDQRSVIVVNTKTVDKEMIISRRSTYQKVLAMEKEGVQVVERDSDLPVDLMLSPAVCLLWYDSETVSKKSAATIGTSSSSLSWIGDIATNVLTSLSFSFSTCIMVFEGEPAFLAAVMDSSDELYAAAGSLGISLQMFCSSSANLTDEIILKCIKSSVKLSKLHVKMPESESLAESFLTKFPSVNPLTAQVILSSSGSLLEFMKLPHKSKVERTQKYHVPEESVDLFSSVCRYGAREDSRSVMTDSSSSVSSGPDSDTHHVSVHSGSKKKQYIAEKDEIDMDDLVHFSPSIEFADTQLKSSGDFQLDDSWSSKDHEIFHFDPVTEFSDAPFKPSGISHPNDSWPSKDPERFDKKSGPGSSSKDTFWEKDQPDFSVEDSLPGIPELEDWSFPVKDKFMSQNRGCKFPVMRDFNLHDNRNSENFIADYKGEVIDRADKYLEEDFPPSPGYNRFARIVSDVNEEELPRKSKSSRKLSFFGSLQPNFPKAADIDSSSERYATEKDSKYDNNTSLRGYADNYPAKRQRTLLEEVLTRRSAVPTTELPFREEISHFGGSPLSNAIRSSNQVQSSPWTVDFLNRVRERSRARKQQQSLPSYASPPSLETPGNIKKANTKRKSPSILEFFKYKGGNKLQEEKRQKRSKNSSASPKNERFYSPLKSCTPIDKRAKQSLSYTANGTGQTKLVWK.

Disordered regions lie at residues 1148–1180 (DSRS…SKKK), 1239–1283 (APFK…QPDF), 1396–1426 (AADI…YADN), 1491–1523 (RSRA…NTKR), and 1536–1594 (GGNK…LVWK). Low complexity predominate over residues 1151-1165 (SVMTDSSSSVSSGPD). 2 stretches are compositionally biased toward basic and acidic residues: residues 1254–1265 (PSKDPERFDKKS) and 1402–1414 (SSER…DSKY). Over residues 1577–1594 (QSLSYTANGTGQTKLVWK) the composition is skewed to polar residues.

It belongs to the XPF family. As to quaternary structure, interacts with PTD. Highest levels in young buds, where male meiosis occurs. Also present at low levels in plantlets, leaves, flowers, and roots.

It is found in the nucleus. Its function is as follows. Essential for the formation of class I meiotic crossovers. The protein is Protein SHORTAGE IN CHIASMATA 1 of Arabidopsis thaliana (Mouse-ear cress).